Consider the following 654-residue polypeptide: MKFTVVAAALLLLCAVRAEEEDKKEDVGTVVGIDLGTTYSCVGVFKNGRVEIIANDQGNRITPSYVAFTPEGERLIGDAAKNQLTSNPENTVFDAKRLIGRTWNDPSVQQDIKFLPFKVVEKKTKPYIQVDIGGGQTKTFAPEEISAMVLTKMKETAEAYLGKKVTHAVVTVPAYFNDAQRQATKDAGTIAGLNVMRIINEPTAAAIAYGLDKREGEKNILVFDLGGGTFDVSLLTIDNGVFEVVATNGDTHLGGEDFDQRVMEHFIKLYKKKTGKDVRKDNRAVQKLRREVEKAKRALSSQHQARIEIESFFEGEDFSETLTRAKFEELNMDLFRSTMKPVQKVLEDSDLKKSDIDEIVLVGGSTRIPKIQQLVKEFFNGKEPSRGINPDEAVAYGAAVQAGVLSGDQDTGDLVLLDVCPLTLGIETVGGVMTKLIPRNTVVPTKKSQIFSTASDNQPTVTIKVYEGERPLTKDNHLLGTFDLTGIPPAPRGVPQIEVTFEIDVNGILRVTAEDKGTGNKNKITITNDQNRLTPEEIERMVNDAEKFAEEDKKLKERIDTRNELESYAYSLKNQIGDKEKLGGKLSPEDKETMEKAVEEKIEWLESHQDADIEDFKAKKKELEEIVQPIISKLYGSGGPPPTGEEDTSEKDEL.

The first 18 residues, 1–18, serve as a signal peptide directing secretion; sequence MKFTVVAAALLLLCAVRA. Residues 1–80 form a required for interaction with ELAPOR1 region; the sequence is MKFTVVAAAL…EGERLIGDAA (80 aa). 36 to 39 is a binding site for ATP; that stretch reads GTTY. Position 86 is a phosphoserine (serine 86). Lysine 96 lines the ATP pocket. Lysine 125 carries the post-translational modification N6-acetyllysine. Residues 125–280 form a nucleotide-binding (NBD) region; it reads KPYIQVDIGG…KKKTGKDVRK (156 aa). The residue at position 160 (tyrosine 160) is a 3'-nitrotyrosine. N6-acetyllysine is present on lysine 213. Residue 227 to 229 coordinates ATP; that stretch reads GGT. Lysine 271 is subject to N6-acetyllysine. ATP is bound at residue 293–300; that stretch reads EKAKRALS. Lysine 326 carries the post-translational modification N6-acetyllysine. Lysine 352 is covalently cross-linked (Glycyl lysine isopeptide (Lys-Gly) (interchain with G-Cter in SUMO2)). Residue lysine 353 is modified to N6-acetyllysine; alternate. Residue lysine 353 forms a Glycyl lysine isopeptide (Lys-Gly) (interchain with G-Cter in SUMO1); alternate linkage. Position 364 to 367 (364 to 367) interacts with ATP; that stretch reads GSTR. Residues 409 to 419 form an interdomain linker region; sequence QDTGDLVLLDV. Residues 420–500 are substrate-binding (SBD); that stretch reads CPLTLGIETV…PRGVPQIEVT (81 aa). Position 447 is an N6-succinyllysine (lysine 447). Arginine 492 is subject to Omega-N-methylarginine. Threonine 518 carries the post-translational modification O-AMP-threonine; alternate. Phosphothreonine; alternate is present on threonine 518. An N6,N6,N6-trimethyllysine; by METTL21A; in vitro modification is found at lysine 585. N6,N6-dimethyllysine; alternate is present on lysine 585. Lysine 585 carries the post-translational modification N6-methyllysine; alternate. Lysine 591 carries the post-translational modification N6-methyllysine. The segment at 631–654 is disordered; sequence ISKLYGSGGPPPTGEEDTSEKDEL. 2 positions are modified to phosphothreonine: threonine 643 and threonine 648. A compositionally biased stretch (acidic residues) spans 644-654; that stretch reads GEEDTSEKDEL. Position 649 is a phosphoserine (serine 649). The Prevents secretion from ER motif lies at 651–654; that stretch reads KDEL.

This sequence belongs to the heat shock protein 70 family. In terms of assembly, monomer and homooligomer; homooligomerization via the interdomain linker inactivates the chaperone activity and acts as a storage of HSPA5/BiP molecules. Interacts with DNAJC1 (via J domain). Component of an EIF2 complex at least composed of CELF1/CUGBP1, CALR, CALR3, EIF2S1, EIF2S2, HSP90B1 and HSPA5. Part of a large chaperone multiprotein complex comprising DNAJB11, HSP90B1, HSPA5, HYOU, PDIA2, PDIA4, PDIA6, PPIB, SDF2L1, UGGT1 and very small amounts of ERP29, but not, or at very low levels, CALR nor CANX. Interacts with TMEM132A and TRIM21. May form a complex with ERLEC1, OS9, SEL1L and SYVN1. Interacts with DNAJC10. Interacts with DNAJB9/ERdj4; leading to recruit HSPA5/BiP to ERN1/IRE1. Interacts with ERN1/IRE1 (via luminal domain); the interaction takes place following interaction with DNAJB9/ERdj4 and leads to inactivate ERN1/IRE1, the interaction also competitively inhibits ERN1 interaction with MANF. Interacts directly with MANF (via SAP domain); the interaction inhibits ATP binding to HSPA5/BiP and subsequent nucleotide exchange. Interacts with EIF2AK3/PERK (via luminal domain); interaction leads to inactivate EIF2AK3/PERK. Interacts with MX1. Interacts with METTL23. Interacts with CEMIP; the interaction induces calcium leakage from the endoplasmic reticulum and cell migration. Interacts with PCSK4 form; the interaction takes place in the endoplasmic reticulum. Interacts with CIPC. Interacts with CCDC88B (via C-terminus); the interaction opposes ERN1-mediated JNK activation, protecting against apoptosis. Interacts with INPP5K; necessary for INPP5K localization at the endoplasmic reticulum. Interacts with MANF; the interaction is direct. Interacts with LOXL2; leading to activate the ERN1/IRE1-XBP1 pathway of the unfolded protein response. Interacts with CLU under stressed condition; interaction increases CLU protein stability; facilitates its retrotranslocation and redistribution to the mitochondria; cooperatively suppress stress-induced apoptosis by stabilizing mitochondrial membrane integrity. Interacts with CCDC47. Interacts with CLN3. Interacts with ELAPOR1; may regulate the function of HSPA5 in apoptosis and cell proliferation. Interacts with CASP7. Interacts with ILDR2; the interaction stabilizes ILDR2 expression. Interacts with ADAM7. Post-translationally, in unstressed cells, AMPylation at Thr-518 by FICD inactivates the chaperome activity: AMPylated form is locked in a relatively inert state and only weakly stimulated by J domain-containing proteins. In response to endoplasmic reticulum stress, de-AMPylation by the same protein, FICD, restores the chaperone activity.

The protein localises to the endoplasmic reticulum lumen. Its subcellular location is the melanosome. It is found in the cytoplasm. The protein resides in the cell surface. It catalyses the reaction ATP + H2O = ADP + phosphate + H(+). With respect to regulation, the chaperone activity is regulated by ATP-induced allosteric coupling of the nucleotide-binding (NBD) and substrate-binding (SBD) domains. In the ADP-bound and nucleotide-free (apo) states, the two domains have little interaction. In contrast, in the ATP-bound state the two domains are tightly coupled, which results in drastically accelerated kinetics in both binding and release of polypeptide substrates. J domain-containing co-chaperones (DNAJB9/ERdj4 or DNAJC10/ERdj5) stimulate the ATPase activity and are required for efficient substrate recognition by HSPA5/BiP. Homooligomerization inactivates participating HSPA5/BiP protomers and probably act as reservoirs to store HSPA5/BiP molecules when they are not needed by the cell. In terms of biological role, endoplasmic reticulum chaperone that plays a key role in protein folding and quality control in the endoplasmic reticulum lumen. Involved in the correct folding of proteins and degradation of misfolded proteins via its interaction with DNAJC10/ERdj5, probably to facilitate the release of DNAJC10/ERdj5 from its substrate. Acts as a key repressor of the EIF2AK3/PERK and ERN1/IRE1-mediated unfolded protein response (UPR). In the unstressed endoplasmic reticulum, recruited by DNAJB9/ERdj4 to the luminal region of ERN1/IRE1, leading to disrupt the dimerization of ERN1/IRE1, thereby inactivating ERN1/IRE1. Also binds and inactivates EIF2AK3/PERK in unstressed cells. Accumulation of misfolded protein in the endoplasmic reticulum causes release of HSPA5/BiP from ERN1/IRE1 and EIF2AK3/PERK, allowing their homodimerization and subsequent activation. Plays an auxiliary role in post-translational transport of small presecretory proteins across endoplasmic reticulum (ER). May function as an allosteric modulator for SEC61 channel-forming translocon complex, likely cooperating with SEC62 to enable the productive insertion of these precursors into SEC61 channel. Appears to specifically regulate translocation of precursors having inhibitory residues in their mature region that weaken channel gating. May also play a role in apoptosis and cell proliferation. This chain is Endoplasmic reticulum chaperone BiP, found in Rattus norvegicus (Rat).